A 484-amino-acid chain; its full sequence is Dolichyl-P-Man:Man5GlcNAc2-PP-dolichol alpha-1,3-mannosyltransferase l(2)not2 (484 aa).

Residues 1 to 43 (MAPPKAASHRPAVRRKKSGTLVDSILDKYLNVRFFKYLLLEPA) are Cytoplasmic-facing. The chain crosses the membrane as a helical span at residues 44–64 (ALPIVGLFVLLAELVINVVVI). Residues 65-97 (QRVPYTEIDWVAYMQECEGFLNGTTNYSLLRGD) are Lumenal-facing. A helical transmembrane segment spans residues 98 to 118 (TGPLVYPAAFVYIYSALYYVT). At 119 to 125 (SHGTNVR) the chain is on the cytoplasmic side. The chain crosses the membrane as a helical span at residues 126 to 146 (LAQYIFAGIYLLQLALVLRLY). The Lumenal portion of the chain corresponds to 147-171 (SKSRKVPPYVLVLSAFTSYRIHSIY). Residues 172-192 (VLRLFNDPVAVLLLYAALNLF) form a helical membrane-spanning segment. Residues 193 to 211 (LDRRWTLGSTFFSLAVGVK) lie on the Cytoplasmic side of the membrane. Residues 212 to 232 (MNILLFAPALLLFYLANLGLL) traverse the membrane as a helical segment. Arg-233 is a topological domain (lumenal). A helical membrane pass occupies residues 234–254 (TILQLAVCGVIQLLLGAPFLL). Residues 255-294 (THPVEYLRGSFDLGRIFEHKWTVNYRFLSRDVFENRTFHV) lie on the Cytoplasmic side of the membrane. Residues 295-315 (SLLGLHLLLLLAFAKPTWTFF) form a helical membrane-spanning segment. Residues 316–403 (QSYVRLRRIE…YGIHFDRCTQ (88 aa)) are Lumenal-facing. A helical transmembrane segment spans residues 404-424 (LALLPFFLCNLVGVACSRSLH). Topologically, residues 425 to 426 (YQ) are cytoplasmic. Residues 427–447 (FYVWYFHSLPYLAWSTPYSLG) form a helical membrane-spanning segment. The Lumenal segment spans residues 448-484 (VRCLILGLIEYCWNTYPSTNFSSAALHFTHIIPPYQL).

This sequence belongs to the glycosyltransferase ALG3 family.

The protein localises to the endoplasmic reticulum membrane. The enzyme catalyses an alpha-D-Man-(1-&gt;2)-alpha-D-Man-(1-&gt;2)-alpha-D-Man-(1-&gt;3)-[alpha-D-Man-(1-&gt;6)]-beta-D-Man-(1-&gt;4)-beta-D-GlcNAc-(1-&gt;4)-alpha-D-GlcNAc-diphospho-di-trans,poly-cis-dolichol + a di-trans,poly-cis-dolichyl beta-D-mannosyl phosphate = an alpha-D-Man-(1-&gt;2)-alpha-D-Man-(1-&gt;2)-alpha-D-Man-(1-&gt;3)-[alpha-D-Man-(1-&gt;3)-alpha-D-Man-(1-&gt;6)]-beta-D-Man-(1-&gt;4)-beta-D-GlcNAc-(1-&gt;4)-alpha-D-GlcNAc-diphospho-di-trans,poly-cis-dolichol + a di-trans,poly-cis-dolichyl phosphate + H(+). Its pathway is protein modification; protein glycosylation. Functionally, probable alpha-1,3-mannosyltransferase involved in the N-glycosylation pathway. Involved in glycosylation of the TNF receptor grnd, regulating its ligand affinity. Required for normal epithelial growth and architecture. Suppressor of JNK-dependent intestinal stem cell proliferation. In Drosophila melanogaster (Fruit fly), this protein is Dolichyl-P-Man:Man5GlcNAc2-PP-dolichol alpha-1,3-mannosyltransferase l(2)not2.